We begin with the raw amino-acid sequence, 270 residues long: UPF0246 protein PsycPRwf_0637 (270 aa).

The protein belongs to the UPF0246 family.

This Psychrobacter sp. (strain PRwf-1) protein is UPF0246 protein PsycPRwf_0637.